The primary structure comprises 193 residues: Inosine triphosphate pyrophosphatase (193 aa).

Position 10 to 15 (10 to 15) interacts with ITP; it reads TGNANK. E42 lines the Mg(2+) pocket. Residues K54, 70–71, K87, 146–149, K169, and 174–175 contribute to the ITP site; these read DT, FGWD, and HR.

The protein belongs to the HAM1 NTPase family. As to quaternary structure, homodimer. Mg(2+) serves as cofactor. Requires Mn(2+) as cofactor.

The protein resides in the cytoplasm. The protein localises to the nucleus. It catalyses the reaction ITP + H2O = IMP + diphosphate + H(+). It carries out the reaction dITP + H2O = dIMP + diphosphate + H(+). The enzyme catalyses XTP + H2O = XMP + diphosphate + H(+). In terms of biological role, pyrophosphatase that hydrolyzes non-canonical purine nucleotides such as inosine triphosphate (ITP), deoxyinosine triphosphate (dITP) or xanthosine 5'-triphosphate (XTP) to their respective monophosphate derivatives. The enzyme does not distinguish between the deoxy- and ribose forms. Probably excludes non-canonical purines from RNA and DNA precursor pools, thus preventing their incorporation into RNA and DNA and avoiding chromosomal lesions. The protein is Inosine triphosphate pyrophosphatase of Mycosarcoma maydis (Corn smut fungus).